Consider the following 596-residue polypeptide: Elongation factor 4 (596 aa).

Residues lysine 2 to glutamate 184 form the tr-type G domain. GTP contacts are provided by residues aspartate 14–threonine 19 and asparagine 131–aspartate 134.

The protein belongs to the TRAFAC class translation factor GTPase superfamily. Classic translation factor GTPase family. LepA subfamily.

It localises to the cell inner membrane. It catalyses the reaction GTP + H2O = GDP + phosphate + H(+). In terms of biological role, required for accurate and efficient protein synthesis under certain stress conditions. May act as a fidelity factor of the translation reaction, by catalyzing a one-codon backward translocation of tRNAs on improperly translocated ribosomes. Back-translocation proceeds from a post-translocation (POST) complex to a pre-translocation (PRE) complex, thus giving elongation factor G a second chance to translocate the tRNAs correctly. Binds to ribosomes in a GTP-dependent manner. This Shewanella pealeana (strain ATCC 700345 / ANG-SQ1) protein is Elongation factor 4.